The following is a 321-amino-acid chain: Malate dehydrogenase (321 aa).

Residues 10-15 and Asp-34 contribute to the NAD(+) site; that span reads GAGQIG. Substrate-binding residues include Arg-83 and Arg-89. NAD(+) contacts are provided by residues Asn-96 and 119–121; that span reads ITN. 2 residues coordinate substrate: Asn-121 and Arg-152. His-176 serves as the catalytic Proton acceptor.

Belongs to the LDH/MDH superfamily. MDH type 3 family.

It carries out the reaction (S)-malate + NAD(+) = oxaloacetate + NADH + H(+). Its function is as follows. Catalyzes the reversible oxidation of malate to oxaloacetate. This chain is Malate dehydrogenase, found in Xanthobacter autotrophicus (strain ATCC BAA-1158 / Py2).